The primary structure comprises 239 residues: MQERKRVLVKFSGEALAGENGFGIENSILKFIASEIKELIKNQIEVGIVIGGGNIIRGVSAAKGGLIKRTSGDHMGMLATVINAIAIQEALESSGLEVRVQSAIQMEAFCETYIMRRAQRHLEKGRVVVFAAGTGNPYFTTDTTAILRAVEIDADMVIKATKVNGVYDKDPKQFDDAVFLNTLSYDEAMQDNIKVMDDTAIALAKDNKLPIVVCNMFEEGNLLKIIQGDTSLCSIVKNN.

10 to 13 contacts ATP; the sequence is KFSG. The interval 18–23 is involved in allosteric activation by GTP; the sequence is GENGFG. Gly52 provides a ligand contact to UMP. ATP-binding residues include Gly53 and Arg57. UMP is bound by residues Asp73 and 134 to 141; that span reads TGNPYFTT. The ATP site is built by Thr161, Tyr167, and Asp170.

It belongs to the UMP kinase family. As to quaternary structure, homohexamer.

The protein resides in the cytoplasm. The enzyme catalyses UMP + ATP = UDP + ADP. Its pathway is pyrimidine metabolism; CTP biosynthesis via de novo pathway; UDP from UMP (UMPK route): step 1/1. Allosterically activated by GTP. Inhibited by UTP. Catalyzes the reversible phosphorylation of UMP to UDP. In Campylobacter jejuni subsp. jejuni serotype O:6 (strain 81116 / NCTC 11828), this protein is Uridylate kinase.